We begin with the raw amino-acid sequence, 66 residues long: DNA gyrase inhibitor YacG (66 aa).

The Zn(2+) site is built by Cys9, Cys12, Cys28, and Cys32.

The protein belongs to the DNA gyrase inhibitor YacG family. In terms of assembly, interacts with GyrB. Zn(2+) serves as cofactor.

In terms of biological role, inhibits all the catalytic activities of DNA gyrase by preventing its interaction with DNA. Acts by binding directly to the C-terminal domain of GyrB, which probably disrupts DNA binding by the gyrase. In Pseudomonas fluorescens (strain SBW25), this protein is DNA gyrase inhibitor YacG.